Consider the following 383-residue polypeptide: tRNA(Met) cytidine acetate ligase (383 aa).

ATP-binding positions include I7–H20, G101, N150, and R175.

This sequence belongs to the TmcAL family.

It localises to the cytoplasm. It catalyses the reaction cytidine(34) in elongator tRNA(Met) + acetate + ATP = N(4)-acetylcytidine(34) in elongator tRNA(Met) + AMP + diphosphate. In terms of biological role, catalyzes the formation of N(4)-acetylcytidine (ac(4)C) at the wobble position of elongator tRNA(Met), using acetate and ATP as substrates. First activates an acetate ion to form acetyladenylate (Ac-AMP) and then transfers the acetyl group to tRNA to form ac(4)C34. The protein is tRNA(Met) cytidine acetate ligase of Lactiplantibacillus plantarum (strain ATCC BAA-793 / NCIMB 8826 / WCFS1) (Lactobacillus plantarum).